Reading from the N-terminus, the 351-residue chain is Pleckstrin (351 aa).

One can recognise a PH 1 domain in the interval 4–101; that stretch reads KRIREGYLVK…WVRDTKKAIK (98 aa). Position 64 is an N6-acetyllysine (lysine 64). Serine 113 and serine 117 each carry phosphoserine. The region spanning 136–221 is the DEP domain; that stretch reads IEKGIKELNL…NPDAFYYFPD (86 aa). One can recognise a PH 2 domain in the interval 244 to 348; that stretch reads VIIKQGCLLK…WIKAIQVASR (105 aa).

Major protein kinase C substrate of platelets. The sequence is that of Pleckstrin (PLEK) from Canis lupus familiaris (Dog).